The chain runs to 112 residues: DNA-binding protein TSIB_0525 (112 aa).

The protein belongs to the PDCD5 family.

The polypeptide is DNA-binding protein TSIB_0525 (Thermococcus sibiricus (strain DSM 12597 / MM 739)).